The chain runs to 169 residues: Protein FAM106A (169 aa).

This sequence belongs to the FAM106 family.

This chain is Protein FAM106A (FAM106A), found in Homo sapiens (Human).